The chain runs to 1499 residues: Ring canal kelch homolog (1499 aa).

The segment covering 56–66 has biased composition (polar residues); it reads LDESSQKQLPR. Residues 56–75 form a disordered region; it reads LDESSQKQLPRSNGKEKTTG. The 67-residue stretch at 100 to 166 folds into the BTB domain; it reads CDVVLVAEGI…VYRAVVEVTE (67 aa). Kelch repeat units follow at residues 351-396, 397-443, 444-490, 492-539, 541-586, and 588-634; these read VLLV…VLGD, KVYA…VLNN, CIYA…VVNG, LYAV…VLDN, LYAV…AHNG, and LYVV…MIDK. Residue Sec637 is a non-standard amino acid, selenocysteine. Disordered regions lie at residues 679–714, 750–786, 825–856, 984–1017, 1033–1085, 1107–1160, 1301–1321, and 1334–1499; these read AGQA…GNNV, LQYA…GGGG, AGYD…CPNL, NQSN…SSSV, SMNN…GNGG, ASTS…PVDV, QVGR…PLRT, and ARSP…TASE. The span at 698 to 713 shows a compositional bias: low complexity; that stretch reads NPEPANSNNSAPNGNN. Positions 776-786 are enriched in gly residues; sequence GERGAVGGGGG. Over residues 986–1003 the composition is skewed to low complexity; the sequence is SNSSSASSASPYGANGPA. Residues 1004 to 1017 are compositionally biased toward polar residues; that stretch reads TTSQPNPTKDSSSV. Residues 1040–1054 show a composition bias toward low complexity; it reads SSAAHGTASGSAPAA. Over residues 1065–1085 the composition is skewed to gly residues; sequence ISGGASGGGAGGAGSSGGNGG. Positions 1107-1119 are enriched in low complexity; the sequence is ASTSTTLGGKSTG. Residues 1135 to 1147 show a composition bias toward polar residues; that stretch reads GPSDPTAGTSAPQ. Residues 1348-1359 are compositionally biased toward basic and acidic residues; the sequence is NREKPREVRRIT. Over residues 1401-1410 the composition is skewed to low complexity; sequence SSASSSSDSD. Positions 1460-1471 are enriched in polar residues; the sequence is VGSSSNETSDSL.

It is found in the cytoplasm. The protein resides in the cytoskeleton. May play a role in organizing the actin cytoskeleton. This chain is Ring canal kelch homolog, found in Anopheles stephensi (Indo-Pakistan malaria mosquito).